The chain runs to 60 residues: Putative mercuric resistance protein (60 aa).

The chain is Putative mercuric resistance protein from Shigella flexneri.